The chain runs to 290 residues: Fructose-bisphosphate aldolase (290 aa).

Ser51 serves as a coordination point for D-glyceraldehyde 3-phosphate. The Proton donor role is filled by Asp86. Zn(2+) is bound by residues His87, Asp107, Glu137, and His179. Position 180 (Gly180) interacts with dihydroxyacetone phosphate. Zn(2+) is bound at residue His208. Dihydroxyacetone phosphate-binding positions include 209 to 211 (GGS) and 230 to 233 (NINT).

The protein belongs to the class II fructose-bisphosphate aldolase family. As to quaternary structure, homodimer. Requires Zn(2+) as cofactor.

The enzyme catalyses beta-D-fructose 1,6-bisphosphate = D-glyceraldehyde 3-phosphate + dihydroxyacetone phosphate. It participates in carbohydrate degradation; glycolysis; D-glyceraldehyde 3-phosphate and glycerone phosphate from D-glucose: step 4/4. In terms of biological role, catalyzes the aldol condensation of dihydroxyacetone phosphate (DHAP or glycerone-phosphate) with glyceraldehyde 3-phosphate (G3P) to form fructose 1,6-bisphosphate (FBP) in gluconeogenesis and the reverse reaction in glycolysis. This chain is Fructose-bisphosphate aldolase (fba), found in Ureaplasma parvum serovar 3 (strain ATCC 700970).